The following is a 736-amino-acid chain: Polyribonucleotide nucleotidyltransferase (736 aa).

Positions 506 and 512 each coordinate Mg(2+). In terms of domain architecture, KH spans 573–632; the sequence is PRLTTIQVPVDAIGLIIGKGGETIRSITEETGAEINIEDDGTVTIACSSVEGTHAALATI. The S1 motif domain maps to 642 to 717; that stretch reads GTIYLGKVRD…GKTRFALSMR (76 aa).

Belongs to the polyribonucleotide nucleotidyltransferase family. Mg(2+) serves as cofactor.

It is found in the cytoplasm. It carries out the reaction RNA(n+1) + phosphate = RNA(n) + a ribonucleoside 5'-diphosphate. Involved in mRNA degradation. Catalyzes the phosphorolysis of single-stranded polyribonucleotides processively in the 3'- to 5'-direction. In Chlorobium limicola (strain DSM 245 / NBRC 103803 / 6330), this protein is Polyribonucleotide nucleotidyltransferase.